Here is a 304-residue protein sequence, read N- to C-terminus: Thyroxine 5-deiodinase (304 aa).

Residues 1-22 (MPRQAASRLVVGEGEGPPGASG) form a disordered region. At 1–44 (MPRQAASRLVVGEGEGPPGASGPAATMLRSLLLHSLRLCAQTAS) the chain is on the cytoplasmic side. The chain crosses the membrane as a helical; Signal-anchor for type II membrane protein span at residues 45–67 (CLVLFPRFLGTAFMLWLLDFLCI). Topologically, residues 68-304 (RKHFLRRRHP…QLHGTRPHRF (237 aa)) are extracellular. Residue U170 is part of the active site. U170 is a non-standard amino acid (selenocysteine).

This sequence belongs to the iodothyronine deiodinase family. As to quaternary structure, monomer. Homodimer. May undergo minor heretodimerization with DIO1 and DIO2.

Its subcellular location is the cell membrane. The protein resides in the endosome membrane. It carries out the reaction 3,3',5'-triiodo-L-thyronine + iodide + A + H(+) = L-thyroxine + AH2. It catalyses the reaction 3,3'-diiodo-L-thyronine + iodide + A + H(+) = 3,3',5-triiodo-L-thyronine + AH2. The enzyme catalyses 3-iodo-L-thyronine + iodide + A + H(+) = 3,5-diiodo-L-thyronine + AH2. The catalysed reaction is L-thyronine + iodide + A + H(+) = 3-iodo-L-thyronine + AH2. It carries out the reaction 3',5'-diiodo-L-thyronine + iodide + A + H(+) = 3,3',5'-triiodo-L-thyronine + AH2. It catalyses the reaction 3'-iodo-L-thyronine + iodide + A + H(+) = 3,3'-diiodo-L-thyronine + AH2. The enzyme catalyses 3,3',5'-triiodothyronamine + iodide + A + H(+) = 3,3',5,5'-tetraiodothyronamine + AH2. The catalysed reaction is 3',5'-diiodothyronamine + iodide + A + H(+) = 3,3',5'-triiodothyronamine + AH2. It carries out the reaction 3,3'-diiodothyronamine + iodide + A + H(+) = 3,3',5-triiodothyronamine + AH2. It catalyses the reaction 3-iodothyronamine + iodide + A + H(+) = 3,5-diiodothyronamine + AH2. The enzyme catalyses 3'-iodothyronamine + iodide + A + H(+) = 3,3'-diiodothyronamine + AH2. The catalysed reaction is thyronamine + iodide + A + H(+) = 3-iodothyronamine + AH2. Its function is as follows. Plays a crucial role in the metabolism of thyroid hormones (TH) and has specific roles in TH activation and inactivation by deiodination. Catalyzes the deiodination of L-thyroxine (T4) to 3,3',5'-triiodothyronine (rT3), 3,5,3'-triiodothyronine (T3) to 3,3'-diiodothyronine (3,3'-T2), 3,5-diiodothyronine (3,5-T2) to 3-monoiodothyronine (3-T1), rT3 to 3',5'-diiodothyronine (3',5'-T2) and 3,3'-T2 to 3'-monoiodothyronine (3'-T1) via inner-ring deiodination (IRD). Catalyzes the deiodination of 3-T1 to L-thyronine (T0) via outer-ring deiodination (ORD). Catalyzes the tyrosyl ring deiodinations of 3,3',5,5'-tetraiodothyronamine, 3,3',5'-triiodothyronamine, 3,5,3'-triiodothyronamine, 3,5-diiodothyronamine, 3,3'-diiodothyronamine and 3-iodothyronamine. The chain is Thyroxine 5-deiodinase (Dio3) from Mus musculus (Mouse).